The primary structure comprises 109 residues: Flagellar hook-basal body complex protein FliE (109 aa).

This sequence belongs to the FliE family.

Its subcellular location is the bacterial flagellum basal body. This is Flagellar hook-basal body complex protein FliE from Pseudomonas savastanoi pv. phaseolicola (strain 1448A / Race 6) (Pseudomonas syringae pv. phaseolicola (strain 1448A / Race 6)).